An 84-amino-acid chain; its full sequence is Defensin-like protein 140 (84 aa).

The signal sequence occupies residues 1–28 (MSKSLQLIVTVLCIFTILVLGEICLAKG). 4 disulfides stabilise this stretch: Cys-37–Cys-81, Cys-46–Cys-65, Cys-51–Cys-75, and Cys-55–Cys-77.

The protein belongs to the DEFL family.

It is found in the secreted. The sequence is that of Defensin-like protein 140 (LCR15) from Arabidopsis thaliana (Mouse-ear cress).